Consider the following 178-residue polypeptide: Large ribosomal subunit protein uL6 (178 aa).

Belongs to the universal ribosomal protein uL6 family. Part of the 50S ribosomal subunit.

Functionally, this protein binds to the 23S rRNA, and is important in its secondary structure. It is located near the subunit interface in the base of the L7/L12 stalk, and near the tRNA binding site of the peptidyltransferase center. The sequence is that of Large ribosomal subunit protein uL6 from Campylobacter jejuni subsp. doylei (strain ATCC BAA-1458 / RM4099 / 269.97).